We begin with the raw amino-acid sequence, 162 residues long: uncharacterized protein (162 aa).

The signal sequence occupies residues 1-24; that stretch reads MKRGVATLPVILVILLSVAAGAGA.

This is an uncharacterized protein from Mycobacterium bovis (strain ATCC BAA-935 / AF2122/97).